A 602-amino-acid chain; its full sequence is RecBCD enzyme subunit RecD (602 aa).

171-178 (GGPGTGKT) contributes to the ATP binding site.

This sequence belongs to the RecD family. As to quaternary structure, heterotrimer of RecB, RecC and RecD. All subunits contribute to DNA-binding.

It carries out the reaction Couples ATP hydrolysis with the unwinding of duplex DNA at the replication fork by translocating in the 5'-3' direction. This creates two antiparallel DNA single strands (ssDNA). The leading ssDNA polymer is the template for DNA polymerase III holoenzyme which synthesizes a continuous strand.. The catalysed reaction is ATP + H2O = ADP + phosphate + H(+). In terms of biological role, a helicase/nuclease that prepares dsDNA breaks (DSB) for recombinational DNA repair. Binds to DSBs and unwinds DNA via a highly rapid and processive ATP-dependent bidirectional helicase activity. Unwinds dsDNA until it encounters a Chi (crossover hotspot instigator) sequence from the 3' direction. Cuts ssDNA a few nucleotides 3' to the Chi site. The properties and activities of the enzyme are changed at Chi. The Chi-altered holoenzyme produces a long 3'-ssDNA overhang and facilitates RecA-binding to the ssDNA for homologous DNA recombination and repair. Holoenzyme degrades any linearized DNA that is unable to undergo homologous recombination. In the holoenzyme this subunit has ssDNA-dependent ATPase and 5'-3' helicase activity. When added to pre-assembled RecBC greatly stimulates nuclease activity and augments holoenzyme processivity. Negatively regulates the RecA-loading ability of RecBCD. The polypeptide is RecBCD enzyme subunit RecD (Buchnera aphidicola subsp. Acyrthosiphon pisum (strain APS) (Acyrthosiphon pisum symbiotic bacterium)).